A 343-amino-acid chain; its full sequence is S-adenosylmethionine:tRNA ribosyltransferase-isomerase (343 aa).

Belongs to the QueA family. In terms of assembly, monomer.

It localises to the cytoplasm. The catalysed reaction is 7-aminomethyl-7-carbaguanosine(34) in tRNA + S-adenosyl-L-methionine = epoxyqueuosine(34) in tRNA + adenine + L-methionine + 2 H(+). The protein operates within tRNA modification; tRNA-queuosine biosynthesis. In terms of biological role, transfers and isomerizes the ribose moiety from AdoMet to the 7-aminomethyl group of 7-deazaguanine (preQ1-tRNA) to give epoxyqueuosine (oQ-tRNA). This Geotalea uraniireducens (strain Rf4) (Geobacter uraniireducens) protein is S-adenosylmethionine:tRNA ribosyltransferase-isomerase.